A 112-amino-acid chain; its full sequence is Putative iron-sulfur cluster insertion protein ErpA (112 aa).

Iron-sulfur cluster contacts are provided by cysteine 40, cysteine 104, and cysteine 106.

The protein belongs to the HesB/IscA family. In terms of assembly, homodimer. Requires iron-sulfur cluster as cofactor.

In terms of biological role, required for insertion of 4Fe-4S clusters. The sequence is that of Putative iron-sulfur cluster insertion protein ErpA from Neisseria gonorrhoeae (strain ATCC 700825 / FA 1090).